We begin with the raw amino-acid sequence, 241 residues long: Orotidine 5'-phosphate decarboxylase (241 aa).

Residues D16, K37, 64–73, T128, R190, Q199, G219, and R220 contribute to the substrate site; that span reads DLKFHDIPTT. K66 (proton donor) is an active-site residue.

Belongs to the OMP decarboxylase family. Type 1 subfamily. In terms of assembly, homodimer.

The enzyme catalyses orotidine 5'-phosphate + H(+) = UMP + CO2. It participates in pyrimidine metabolism; UMP biosynthesis via de novo pathway; UMP from orotate: step 2/2. In terms of biological role, catalyzes the decarboxylation of orotidine 5'-monophosphate (OMP) to uridine 5'-monophosphate (UMP). The polypeptide is Orotidine 5'-phosphate decarboxylase (Prochlorococcus marinus (strain NATL2A)).